The primary structure comprises 121 residues: Small ribosomal subunit protein uS13 (121 aa).

Residues 91–121 (HRRGLPVRGQNTKNNARTRKGPSKTVAGKKK) form a disordered region. Basic residues predominate over residues 106-121 (ARTRKGPSKTVAGKKK).

This sequence belongs to the universal ribosomal protein uS13 family. In terms of assembly, part of the 30S ribosomal subunit. Forms a loose heterodimer with protein S19. Forms two bridges to the 50S subunit in the 70S ribosome.

Its function is as follows. Located at the top of the head of the 30S subunit, it contacts several helices of the 16S rRNA. In the 70S ribosome it contacts the 23S rRNA (bridge B1a) and protein L5 of the 50S subunit (bridge B1b), connecting the 2 subunits; these bridges are implicated in subunit movement. Contacts the tRNAs in the A and P-sites. The sequence is that of Small ribosomal subunit protein uS13 from Listeria welshimeri serovar 6b (strain ATCC 35897 / DSM 20650 / CCUG 15529 / CIP 8149 / NCTC 11857 / SLCC 5334 / V8).